Consider the following 464-residue polypeptide: Probable 3-ketoacyl-CoA synthase 21 (464 aa).

A helical membrane pass occupies residues 21 to 41 (LLSSGVSVFEIFAGLLVVHLI). In terms of domain architecture, FAE spans 42 to 333 (YQRIRTRVKV…VIQHILCKKL (292 aa)). Residues Cys-187, His-352, His-356, His-385, and Asn-389 contribute to the active site.

This sequence belongs to the thiolase-like superfamily. Chalcone/stilbene synthases family. Expressed in flowers.

It localises to the membrane. The enzyme catalyses a very-long-chain acyl-CoA + malonyl-CoA + H(+) = a very-long-chain 3-oxoacyl-CoA + CO2 + CoA. It functions in the pathway lipid metabolism; fatty acid biosynthesis. The chain is Probable 3-ketoacyl-CoA synthase 21 from Arabidopsis thaliana (Mouse-ear cress).